Consider the following 511-residue polypeptide: Coatomer subunit delta (511 aa).

Over residues 167–177 (QQARRDAERQG) the composition is skewed to basic and acidic residues. Residues 167-188 (QQARRDAERQGKKAPGFGGFGS) are disordered. S223 is subject to Phosphoserine. K233 and K241 each carry N6-acetyllysine. S244 carries the phosphoserine modification. An MHD domain is found at 271–511 (MESVHMKIEE…TFLVDKYEIL (241 aa)). An N6-acetyllysine mark is found at K309 and K351. S493 bears the Phosphoserine mark.

The protein belongs to the adaptor complexes medium subunit family. Delta-COP subfamily. As to quaternary structure, oligomeric complex that consists of at least the alpha, beta, beta', gamma, delta, epsilon and zeta subunits.

Its subcellular location is the cytoplasm. The protein localises to the golgi apparatus membrane. The protein resides in the cytoplasmic vesicle. It localises to the COPI-coated vesicle membrane. In terms of biological role, the coatomer is a cytosolic protein complex that binds to dilysine motifs and reversibly associates with Golgi non-clathrin-coated vesicles, which further mediate biosynthetic protein transport from the ER, via the Golgi up to the trans Golgi network. Coatomer complex is required for budding from Golgi membranes, and is essential for the retrograde Golgi-to-ER transport of dilysine-tagged proteins. In mammals, the coatomer can only be recruited by membranes associated to ADP-ribosylation factors (ARFs), which are small GTP-binding proteins; the complex also influences the Golgi structural integrity, as well as the processing, activity, and endocytic recycling of LDL receptors. The protein is Coatomer subunit delta (ARCN1) of Pongo abelii (Sumatran orangutan).